The primary structure comprises 35 residues: Augerpeptide hheTx4 (35 aa).

Contains 4 disulfide bonds. Expressed by the venom duct.

It localises to the secreted. The sequence is that of Augerpeptide hheTx4 from Hastula hectica (Sea snail).